Here is a 413-residue protein sequence, read N- to C-terminus: SWIRM domain-containing protein FUN19 (413 aa).

Over residues 35 to 51 the composition is skewed to low complexity; that stretch reads KASNNNNDSNKNGLNMS. 3 disordered regions span residues 35-55, 189-211, and 249-271; these read KASN…DYSN, YNDD…PLAS, and YSPQ…PSAS. At Thr194 the chain carries Phosphothreonine. The span at 200–211 shows a compositional bias: low complexity; sequence SSSSRLPSPLAS. Phosphoserine is present on residues Ser207 and Ser211. The 98-residue stretch at 316–413 folds into the SWIRM domain; it reads LKIEWKGSPM…LQDSNFTKYL (98 aa).

The protein is SWIRM domain-containing protein FUN19 (FUN19) of Saccharomyces cerevisiae (strain ATCC 204508 / S288c) (Baker's yeast).